A 226-amino-acid polypeptide reads, in one-letter code: UPF0111 protein AF_1799 (226 aa).

The protein belongs to the UPF0111 family.

The polypeptide is UPF0111 protein AF_1799 (Archaeoglobus fulgidus (strain ATCC 49558 / DSM 4304 / JCM 9628 / NBRC 100126 / VC-16)).